A 141-amino-acid chain; its full sequence is Large ribosomal subunit protein bL17 (141 aa).

This sequence belongs to the bacterial ribosomal protein bL17 family. As to quaternary structure, part of the 50S ribosomal subunit. Contacts protein L32.

This Gluconacetobacter diazotrophicus (strain ATCC 49037 / DSM 5601 / CCUG 37298 / CIP 103539 / LMG 7603 / PAl5) protein is Large ribosomal subunit protein bL17.